Here is a 677-residue protein sequence, read N- to C-terminus: DNA ligase (677 aa).

Residues Asp34–Asp38, Ser83–Leu84, and Glu115 contribute to the NAD(+) site. Lys117 functions as the N6-AMP-lysine intermediate in the catalytic mechanism. NAD(+)-binding residues include Arg138, Glu180, Lys297, and Lys321. Residues Cys416, Cys419, Cys434, and Cys439 each contribute to the Zn(2+) site. A BRCT domain is found at Lys596 to Ala677.

It belongs to the NAD-dependent DNA ligase family. LigA subfamily. The cofactor is Mg(2+). Mn(2+) is required as a cofactor.

It carries out the reaction NAD(+) + (deoxyribonucleotide)n-3'-hydroxyl + 5'-phospho-(deoxyribonucleotide)m = (deoxyribonucleotide)n+m + AMP + beta-nicotinamide D-nucleotide.. DNA ligase that catalyzes the formation of phosphodiester linkages between 5'-phosphoryl and 3'-hydroxyl groups in double-stranded DNA using NAD as a coenzyme and as the energy source for the reaction. It is essential for DNA replication and repair of damaged DNA. This is DNA ligase from Acidobacterium capsulatum (strain ATCC 51196 / DSM 11244 / BCRC 80197 / JCM 7670 / NBRC 15755 / NCIMB 13165 / 161).